The sequence spans 310 residues: Inner membrane protein YfdC (310 aa).

Positions 1-12 (MDNDKIDQHSDE) are enriched in basic and acidic residues. The disordered stretch occupies residues 1-27 (MDNDKIDQHSDEIEVESEEKERGKKIE). The Cytoplasmic segment spans residues 1-58 (MDNDKIDQHSDEIEVESEEKERGKKIEIDEDRLPSRAMAIHEHIRQDGEKELERDAMA). Residues 59 to 81 (LLWSAIAAGLSMGASLLAKGIFQ) form a helical membrane-spanning segment. Over 82–90 (VELEGVPGS) the chain is Periplasmic. Residues 91-113 (FLLENLGYTFGFIIVIMARQQLF) form a helical membrane-spanning segment. Residues 114–133 (TENTVTAVLPVMQKPTMSNV) lie on the Cytoplasmic side of the membrane. The chain crosses the membrane as a helical span at residues 134 to 156 (GLLIRLWGVVLLGNILGTGIAAW). The Periplasmic portion of the chain corresponds to 157 to 186 (AFEYMPIFNEETRDAFVKIGMDVMKNTPSE). The chain crosses the membrane as a helical span at residues 187 to 206 (MFANAIISGWLIATMVWMFP). The Cytoplasmic portion of the chain corresponds to 207-212 (AAGAAK). The helical transmembrane segment at 213-232 (IVVIILMTWLIALGDTTHIV) threads the bilayer. At 233–251 (VGSVEILYLVFNGTLHWSD) the chain is on the periplasmic side. The chain crosses the membrane as a helical span at residues 252 to 274 (FIWPFALPTLAGNICGGTFIFAL). The Cytoplasmic portion of the chain corresponds to 275-310 (MSHAQIRNDMSNKRKAEARQKAERAENIKKNYKNPA). Residues 291–303 (EARQKAERAENIK) show a composition bias toward basic and acidic residues. Positions 291-310 (EARQKAERAENIKKNYKNPA) are disordered.

It localises to the cell inner membrane. This chain is Inner membrane protein YfdC (yfdC), found in Escherichia coli (strain K12).